Reading from the N-terminus, the 89-residue chain is UPF0147 protein STK_04605 (89 aa).

The protein belongs to the UPF0147 family.

In Sulfurisphaera tokodaii (strain DSM 16993 / JCM 10545 / NBRC 100140 / 7) (Sulfolobus tokodaii), this protein is UPF0147 protein STK_04605.